Reading from the N-terminus, the 417-residue chain is Queuine tRNA-ribosyltransferase accessory subunit 2 (417 aa).

4 residues coordinate Zn(2+): Cys-324, Cys-326, Cys-329, and His-355.

The protein belongs to the queuine tRNA-ribosyltransferase family. QTRT2 subfamily. As to quaternary structure, heterodimer of a catalytic subunit and an accessory subunit. The cofactor is Zn(2+).

Its subcellular location is the cytoplasm. Its function is as follows. Non-catalytic subunit of the queuine tRNA-ribosyltransferase (TGT) that catalyzes the base-exchange of a guanine (G) residue with queuine (Q) at position 34 (anticodon wobble position) in tRNAs with GU(N) anticodons (tRNA-Asp, -Asn, -His and -Tyr), resulting in the hypermodified nucleoside queuosine (7-(((4,5-cis-dihydroxy-2-cyclopenten-1-yl)amino)methyl)-7-deazaguanosine). The polypeptide is Queuine tRNA-ribosyltransferase accessory subunit 2 (Drosophila pseudoobscura pseudoobscura (Fruit fly)).